Consider the following 92-residue polypeptide: Small ribosomal subunit protein uS19 (92 aa).

The protein belongs to the universal ribosomal protein uS19 family.

In terms of biological role, protein S19 forms a complex with S13 that binds strongly to the 16S ribosomal RNA. In Nitrobacter hamburgensis (strain DSM 10229 / NCIMB 13809 / X14), this protein is Small ribosomal subunit protein uS19.